Consider the following 109-residue polypeptide: Thioredoxin (109 aa).

Positions 2-107 (SISQVIDTSF…LLNTLQKHLK (106 aa)) constitute a Thioredoxin domain. Catalysis depends on nucleophile residues Cys31 and Cys34. Cys31 and Cys34 are oxidised to a cystine.

The protein belongs to the thioredoxin family.

The protein resides in the plastid. It localises to the chloroplast. Functionally, participates in various redox reactions through the reversible oxidation of its active center dithiol to a disulfide and catalyzes dithiol-disulfide exchange reactions. This chain is Thioredoxin (trxA), found in Griffithsia pacifica (Red alga).